The following is a 345-amino-acid chain: MLLLLCVNMSGTQMSAFLRKYLADEDKKIRAQFKESDPNNKLILWMHEKTRITEEDLARPYTEDEVKELCLRTKVKVDMTAWNCLWEAKKRFEAKGRFVNKSERFINRMYMKAVRRKMVQPYPEEFVAQRREIVAAETKKQNISRLDRWQKKKSQNLSAPESSPDAHASSNDAVQSHEDQANTNLSSLSQMNFQVEAMAPPGVSSSDLSGIGDDEDEQQQSGFQDENINRPETEINENSVRCDPINLGRMRTGCINSQANNSFRNTESDPDYYMFGTQLSTLVRPTSTQEPDDQVNCPETEMNESWVRCDQINSESLSIGPSIDSEGTITFQNTESEPIDVTSIA.

The tract at residues 115 to 337 (RRKMVQPYPE…TITFQNTESE (223 aa)) is required for binding to Su(var)205. Disordered regions lie at residues 145-180 (RLDR…HEDQ) and 200-231 (PPGV…INRP). Short sequence motifs (su(var)205-binding Pro-containing repeat) lie at residues 231–237 (PETEINE) and 298–304 (PETEMNE).

Component of the HipHop-HOAP telomere capping complex, composed of at least HipHop and cav/HOAP, and may include Su(var)205/HP1; HipHop and cav/HOAP, but not Su(var)205, are interdependent for their protein stability. Interacts with HipHop (via N-terminus). Interacts (via C-terminus) with Su(var)205/HP1 dimer (via hinge and chromoshadow domain) and Orc1; possibly interacts with other components of the origin recognition complex (ORC). Each molecule of cav/HOAP interacts with 2 molecules of Su(var)205/HP1. The HipHop-HOAP complex recruits the MTV complex, consisting of moi/modigliani, tea and ver/verrocchio, to telomeres, forming the terminin telomere-capping complex. Interacts with moi/modigliani; the interaction is direct. Interacts with ver/verrochio; the interaction is direct. Interacts with HP6, which is also part of the terminin complex. Interacts (via N-terminus) with peo/pendolino (via N-terminus); the interaction is direct.

It localises to the nucleus. It is found in the chromosome. Its subcellular location is the telomere. Part of the HipHop-HOAP complex that recruits the MTV complex to form the terminin telomere-capping complex, which binds to chromosome ends in a sequence-independent manner and prevents telomere fusion. Telomere capping is independent of the origin recognition complex (ORC). The sequence is that of Telomere-binding protein cav from Drosophila melanogaster (Fruit fly).